Reading from the N-terminus, the 64-residue chain is Large ribosomal subunit protein bL35 (64 aa).

Basic residues predominate over residues 1–26; that stretch reads MPKMKTKSAAAKRFKTTKSGKIKRKQ. A disordered region spans residues 1–46; it reads MPKMKTKSAAAKRFKTTKSGKIKRKQAYTSHLAPNKTTKQKRHLRK.

It belongs to the bacterial ribosomal protein bL35 family.

The sequence is that of Large ribosomal subunit protein bL35 from Mycoplasmoides gallisepticum (strain R(low / passage 15 / clone 2)) (Mycoplasma gallisepticum).